The following is a 520-amino-acid chain: Amino-acid permease BAT1 homolog (520 aa).

The next 12 helical transmembrane spans lie at 39–59 (VLSN…ITTL), 74–94 (FGWF…AEIC), 118–138 (FASW…TTSV), 168–188 (VVIA…SLPI), 193–213 (FFGQ…MIAV), 236–256 (AGIH…QYTL), 278–298 (IGII…ILGI), 334–354 (SGIG…FCGM), 387–407 (VPIN…LPSL), 410–430 (LVAF…AYAL), 454–474 (GVAV…LFSL), and 487–507 (YTPV…LLSA).

It belongs to the amino acid-polyamine-organocation (APC) superfamily. Amino acid/choline transporter (ACT) (TC 2.A.3.4) family.

The protein localises to the membrane. May be involved in the transport of amino acids. The polypeptide is Amino-acid permease BAT1 homolog (BAT1) (Oryza sativa subsp. japonica (Rice)).